A 97-amino-acid chain; its full sequence is Large ribosomal subunit protein uL23 (97 aa).

It belongs to the universal ribosomal protein uL23 family. In terms of assembly, part of the 50S ribosomal subunit. Contacts protein L29, and trigger factor when it is bound to the ribosome.

In terms of biological role, one of the early assembly proteins it binds 23S rRNA. One of the proteins that surrounds the polypeptide exit tunnel on the outside of the ribosome. Forms the main docking site for trigger factor binding to the ribosome. In Agrobacterium fabrum (strain C58 / ATCC 33970) (Agrobacterium tumefaciens (strain C58)), this protein is Large ribosomal subunit protein uL23.